Consider the following 143-residue polypeptide: Hemoglobin subunit alpha-1 (143 aa).

An N-acetylserine modification is found at Ser-2. Positions 2-143 (SLSSKDKATV…RALALAEKYR (142 aa)) constitute a Globin domain. Position 60 (His-60) interacts with O2. His-89 is a binding site for heme b.

It belongs to the globin family. Hb 1 is a heterotetramer of two alpha-1 and two beta-1 chains. Hb 3 is a heterotetramer of two alpha-1 and two beta-2 chains. Red blood cells.

In terms of biological role, involved in oxygen transport from gills to the various peripheral tissues. This Gadus morhua (Atlantic cod) protein is Hemoglobin subunit alpha-1 (hba1).